Reading from the N-terminus, the 406-residue chain is MRAMRPVAHLARCFCASSSVKETRPSIQAIAELRKALPGTSMLKAREALTASRSPDAPDTDNVEAAIAWLEQTRASDGAKREAKVASRVTAEGTIGLCTLSDGISSPGARAAMVELNCETDFVARNDIFGALARDIAHTAAWFPIVAASETSAVLSDVDVAAFLECPIIPFEASEENKHDVISVRAAITSVVARLGEKVALGRVASLAPTSGGSHGSALVCGSFAHGTASAPPAPQTPVAATFASGRVASLLAVQVHGPLSQRIMSRTATTQHNDHDHDRNGDDERKRQLRALARSLARQAAGFPTTSVDAPSATAAVASDASSETSGALLTQPFVMLLPAAGLDPSVNEQKSVRDALELWSNTYAGQADGIRVAALRRWEVGETAARPSDETSFADQVKEAAGLA.

Positions 387 to 406 (ARPSDETSFADQVKEAAGLA) are disordered.

Belongs to the EF-Ts family.

The protein resides in the mitochondrion. Functionally, associates with the EF-Tu.GDP complex and induces the exchange of GDP to GTP. It remains bound to the aminoacyl-tRNA.EF-Tu.GTP complex up to the GTP hydrolysis stage on the ribosome. In Malassezia globosa (strain ATCC MYA-4612 / CBS 7966) (Dandruff-associated fungus), this protein is Elongation factor Ts, mitochondrial.